Reading from the N-terminus, the 165-residue chain is Ribosome maturation factor RimM (165 aa).

Residues 94–165 form the PRC barrel domain; sequence EDEFYIADLT…YVILNYQREA (72 aa).

Belongs to the RimM family. As to quaternary structure, binds ribosomal protein uS19.

The protein resides in the cytoplasm. In terms of biological role, an accessory protein needed during the final step in the assembly of 30S ribosomal subunit, possibly for assembly of the head region. Essential for efficient processing of 16S rRNA. May be needed both before and after RbfA during the maturation of 16S rRNA. It has affinity for free ribosomal 30S subunits but not for 70S ribosomes. This is Ribosome maturation factor RimM from Rickettsia rickettsii (strain Sheila Smith).